The sequence spans 211 residues: Ribosomal RNA small subunit methyltransferase G (211 aa).

Residues glycine 73, 126–127 (IE), and arginine 142 each bind S-adenosyl-L-methionine.

The protein belongs to the methyltransferase superfamily. RNA methyltransferase RsmG family.

It localises to the cytoplasm. The catalysed reaction is guanosine(527) in 16S rRNA + S-adenosyl-L-methionine = N(7)-methylguanosine(527) in 16S rRNA + S-adenosyl-L-homocysteine. Specifically methylates the N7 position of guanine in position 527 of 16S rRNA. The protein is Ribosomal RNA small subunit methyltransferase G of Methylorubrum populi (strain ATCC BAA-705 / NCIMB 13946 / BJ001) (Methylobacterium populi).